A 439-amino-acid polypeptide reads, in one-letter code: Ornithine aminotransferase, mitochondrial (439 aa).

Residues 1-25 (MLSKLARLQTVAGLGLGVHSSVASA) constitute a mitochondrion transit peptide. K49 and K66 each carry N6-acetyllysine. At K102 the chain carries N6-succinyllysine. K107 is modified (N6-acetyllysine; alternate). K107 carries the N6-succinyllysine; alternate modification. At K292 the chain carries N6-(pyridoxal phosphate)lysine. The residue at position 362 (K362) is an N6-acetyllysine; alternate. Position 362 is an N6-succinyllysine; alternate (K362). 2 positions are modified to N6-acetyllysine: K386 and K392. The residue at position 405 (K405) is an N6-acetyllysine; alternate. The residue at position 405 (K405) is an N6-succinyllysine; alternate. The residue at position 421 (K421) is an N6-acetyllysine.

This sequence belongs to the class-III pyridoxal-phosphate-dependent aminotransferase family. As to quaternary structure, homohexamer. Requires pyridoxal 5'-phosphate as cofactor.

It localises to the mitochondrion matrix. The catalysed reaction is L-ornithine + 2-oxoglutarate = L-glutamate 5-semialdehyde + L-glutamate. Its pathway is amino-acid biosynthesis; L-proline biosynthesis; L-glutamate 5-semialdehyde from L-ornithine: step 1/1. In terms of biological role, catalyzes the reversible interconversion of L-ornithine and 2-oxoglutarate to L-glutamate semialdehyde and L-glutamate. This Bos taurus (Bovine) protein is Ornithine aminotransferase, mitochondrial (OAT).